Reading from the N-terminus, the 677-residue chain is MDRGSALPAEISPQLLRPLAYRVLSKKYGLHIKSDGLAQLAKFIGNAFGVDWRRSAETMQFLERFAAIWREQERGLFVDALGVDAVTQELRERNKTAKQRRPARARETTLDALVRPTEAYSAVESSGGDVTATEPMDEDTVREEPLDWTHYFKVIDTFSQQQFTYDVTKRRYRLVQQRESAAGPLSTLLRIPSLEANLAQFPTRYHLVRDRVLRNASFQNDDVYNPLSSMQQLQQQLDAGGAPLASTAYMSITQIKNLLGRDGKNFLLLGLIRKDSKGFWSLEDPSGSIEIDISETYPTKGTYYVPGCIVLAEGIYSSAGNRFRVSSITHPPGERREAFLEAIGNLDLLGIHGPSNESYISRLDKELKIRLHYLEKELTDHRFVFLGGNIFLDDTMTETALAKLFDVLEHDPPTVLVLPGSFTSTPIYPSSDSKSSSSTAAYRANFDALAKLLSKYERLINETTFVFIPGDNDPWGSMAYLGVAGTLPQHPIPGDFVTKVNRICKHVVWGSNPTRIAYLSQELVIMRDDMCNRFKRNSIIFPTVEEEQKQEYMLLQQELQDDERSSDLSISQLIKSRDQLPASVQESRKIVKTILDQQHLSPFTSQVRPITWDYDYTLHLSPIPSTMIICDPTAPKYDVTYNGCKSINPGSFLHKRSVNYTEYTPSLRKATEEEIVV.

This sequence belongs to the DNA polymerase epsilon subunit B family. As to quaternary structure, heterotetramer. Consists of four subunits: POL2, DPB2, DPB3 and DPB4.

It is found in the nucleus. As accessory component of the DNA polymerase epsilon (DNA polymerase II) participates in chromosomal DNA replication. This Eremothecium gossypii (strain ATCC 10895 / CBS 109.51 / FGSC 9923 / NRRL Y-1056) (Yeast) protein is DNA polymerase epsilon subunit B (DPB2).